The following is a 165-amino-acid chain: Chorismate pyruvate-lyase (165 aa).

Substrate contacts are provided by methionine 35, arginine 77, leucine 115, and glutamate 156.

Belongs to the UbiC family. In terms of assembly, monomer.

It localises to the cytoplasm. The enzyme catalyses chorismate = 4-hydroxybenzoate + pyruvate. It participates in cofactor biosynthesis; ubiquinone biosynthesis. In terms of biological role, removes the pyruvyl group from chorismate, with concomitant aromatization of the ring, to provide 4-hydroxybenzoate (4HB) for the ubiquinone pathway. This Salmonella arizonae (strain ATCC BAA-731 / CDC346-86 / RSK2980) protein is Chorismate pyruvate-lyase.